Here is a 130-residue protein sequence, read N- to C-terminus: MSGRGKQGGKARAKAKTRSSRAGLQFPVGRVHRLLRKGNYSERVGAGAPVYLAAVLEYLTAEILELAANAARDNKKTRIIPRHLQLAIRNDEELNKLLGRVTIAQGGVLPNIQAVLLPKKTESHHKPKGK.

The disordered stretch occupies residues 1 to 22 (MSGRGKQGGKARAKAKTRSSRA). Ser-2 is modified (phosphoserine; by RPS6KA5). Arg-4 bears the Citrulline; alternate mark. Arg-4 bears the Symmetric dimethylarginine; by PRMT5; alternate mark. Lys-6 and Lys-10 each carry N6-(2-hydroxyisobutyryl)lysine. Positions 7–19 (QGGKARAKAKTRS) are enriched in basic residues. N6-lactoyllysine; alternate is present on Lys-10. Lys-37 bears the N6-(2-hydroxyisobutyryl)lysine; alternate mark. The residue at position 37 (Lys-37) is an N6-(beta-hydroxybutyryl)lysine; alternate. Residue Lys-37 is modified to N6-crotonyllysine; alternate. N6-(2-hydroxyisobutyryl)lysine is present on residues Lys-75, Lys-76, and Lys-96. Residue Lys-96 is modified to N6-glutaryllysine; alternate. An N5-methylglutamine modification is found at Gln-105. Lys-119 carries the post-translational modification N6-(2-hydroxyisobutyryl)lysine; alternate. N6-crotonyllysine; alternate occurs at positions 119 and 120. Residues Lys-119 and Lys-120 each carry the N6-glutaryllysine; alternate modification. Residue Lys-120 forms a Glycyl lysine isopeptide (Lys-Gly) (interchain with G-Cter in ubiquitin); alternate linkage. At Thr-121 the chain carries Phosphothreonine; by DCAF1. Lys-126 is subject to N6-crotonyllysine; alternate. Lys-126 is subject to N6-glutaryllysine; alternate.

It belongs to the histone H2A family. In terms of assembly, the nucleosome is a histone octamer containing two molecules each of H2A, H2B, H3 and H4 assembled in one H3-H4 heterotetramer and two H2A-H2B heterodimers. The octamer wraps approximately 147 bp of DNA. Deiminated on Arg-4 in granulocytes upon calcium entry. Post-translationally, monoubiquitination of Lys-120 (H2AK119Ub) by RING1, TRIM37 and RNF2/RING2 complex gives a specific tag for epigenetic transcriptional repression and participates in X chromosome inactivation of female mammals. It is involved in the initiation of both imprinted and random X inactivation. Ubiquitinated H2A is enriched in inactive X chromosome chromatin. Ubiquitination of H2A functions downstream of methylation of 'Lys-27' of histone H3 (H3K27me). H2AK119Ub by RNF2/RING2 can also be induced by ultraviolet and may be involved in DNA repair. Following DNA double-strand breaks (DSBs), it is ubiquitinated through 'Lys-63' linkage of ubiquitin moieties by the E2 ligase UBE2N and the E3 ligases RNF8 and RNF168, leading to the recruitment of repair proteins to sites of DNA damage. Ubiquitination at Lys-14 and Lys-16 (H2AK13Ub and H2AK15Ub, respectively) in response to DNA damage is initiated by RNF168 that mediates monoubiquitination at these 2 sites, and 'Lys-63'-linked ubiquitin are then conjugated to monoubiquitin; RNF8 is able to extend 'Lys-63'-linked ubiquitin chains in vitro. H2AK119Ub and ionizing radiation-induced 'Lys-63'-linked ubiquitination (H2AK13Ub and H2AK15Ub) are distinct events. In terms of processing, phosphorylation on Ser-2 (H2AS1ph) is enhanced during mitosis. Phosphorylation on Ser-2 by RPS6KA5/MSK1 directly represses transcription. Acetylation of H3 inhibits Ser-2 phosphorylation by RPS6KA5/MSK1. Phosphorylation at Thr-121 (H2AT120ph) by DCAF1 is present in the regulatory region of many tumor suppresor genes and down-regulates their transcription. Symmetric dimethylation on Arg-4 by the PRDM1/PRMT5 complex may play a crucial role in the germ-cell lineage. Post-translationally, glutamine methylation at Gln-105 (H2AQ104me) by FBL is specifically dedicated to polymerase I. It is present at 35S ribosomal DNA locus and impairs binding of the FACT complex. In terms of processing, crotonylation (Kcr) is specifically present in male germ cells and marks testis-specific genes in post-meiotic cells, including X-linked genes that escape sex chromosome inactivation in haploid cells. Crotonylation marks active promoters and enhancers and confers resistance to transcriptional repressors. It is also associated with post-meiotically activated genes on autosomes. Lactylated in macrophages by EP300/P300 by using lactoyl-CoA directly derived from endogenous or exogenous lactate, leading to stimulates gene transcription.

It is found in the nucleus. The protein resides in the chromosome. In terms of biological role, core component of nucleosome. Nucleosomes wrap and compact DNA into chromatin, limiting DNA accessibility to the cellular machineries which require DNA as a template. Histones thereby play a central role in transcription regulation, DNA repair, DNA replication and chromosomal stability. DNA accessibility is regulated via a complex set of post-translational modifications of histones, also called histone code, and nucleosome remodeling. This is Histone H2A type 1-F from Rattus norvegicus (Rat).